A 181-amino-acid chain; its full sequence is Ribonuclease HII (181 aa).

In terms of domain architecture, RNase H type-2 spans 1-181 (MICGIDEVGR…SLHRKNFKLI (181 aa)). The a divalent metal cation site is built by aspartate 6, glutamate 7, and aspartate 98.

It belongs to the RNase HII family. The cofactor is Mn(2+). It depends on Mg(2+) as a cofactor.

Its subcellular location is the cytoplasm. It catalyses the reaction Endonucleolytic cleavage to 5'-phosphomonoester.. Endonuclease that specifically degrades the RNA of RNA-DNA hybrids. The sequence is that of Ribonuclease HII (rnhB) from Borreliella burgdorferi (strain ATCC 35210 / DSM 4680 / CIP 102532 / B31) (Borrelia burgdorferi).